The following is a 555-amino-acid chain: MEPVTKWSPKQVVDWTRGLDDCLQPYVHKFEREKIDGEQLLKISHQDLEELGVTRIGHQELVLEAVDLLCALNYGLETDTMKNLVLKLRASSHNLQNYISSRRKSPAYDGNTSRKPPNEFLTSVVELIGAAKALLAWLDRAPFTGITDLSVTKNKIIQLCLDLTTAVQKDCLIAEMEDKVLNVVKVLNGICDKTMRSTTDPVMSQCACLEEVHLPNVRPGEGLGMYIKSTYDGLHVITGTTENSPADRSQKIHAGDEVIQVNRQTVVGWQLKNLVRKLRENPTGVVLLLKKRPTGSFSFTPAPLKNLRWKPPLVQTSPPPTTTQSPESTMDASLKKEKPAILDLYIPPPPAVPYSPRDENVSFGYRGHSKSKQPLPVRKGSESPNSFLDQESQRRRFTIADSDQLPGYSVETNVLPTKMRGKTPSYGKPRPLSMPADGNWMGIVDPFAKPRGNGRKGEDALCRYFSNERITPITEESASPMYRFSRPLTERHLVRGADYIRGSRCYINSDLHSSATIPFQEEGSKKKSASSSAKASSGEPSLLVSWLTRLKLLTH.

The region spanning 7–72 (WSPKQVVDWT…LEAVDLLCAL (66 aa)) is the SAM domain. The CRIC domain maps to 80–174 (TMKNLVLKLR…TAVQKDCLIA (95 aa)). The PDZ domain occupies 211–293 (EVHLPNVRPG…GVVLLLKKRP (83 aa)). 3 disordered regions span residues 308–333 (RWKP…MDAS), 362–389 (SFGY…SFLD), and 518–538 (PFQE…ASSG). Residues 311–329 (PPLVQTSPPPTTTQSPEST) show a composition bias toward low complexity. Residues 325 to 546 (SPESTMDASL…SGEPSLLVSW (222 aa)) form the DUF1170 domain. Residues serine 381 and serine 383 each carry the phosphoserine modification.

This sequence belongs to the CNKSR family. In terms of assembly, interacts with epithelial sodium channel ENaC. Interacts directly with SCNN1A (ENaC subunit alpha) and SCNN1B (ENaC subunit beta) C-terminal tails. Interacts with ENaC regulatory proteins NEDD4L, RAF1 and SGK1. Expressed in kidney.

The protein resides in the cytoplasm. It localises to the apical cell membrane. Functionally, involved in transepithelial sodium transport. Regulates aldosterone-induced and epithelial sodium channel (ENaC)-mediated sodium transport through regulation of ENaC cell surface expression. Acts as a scaffold protein coordinating the assembly of an ENaC-regulatory complex (ERC). This chain is Connector enhancer of kinase suppressor of ras 3 (Cnksr3), found in Mus musculus (Mouse).